A 32-amino-acid chain; its full sequence is Photosystem II reaction center protein T (32 aa).

A helical transmembrane segment spans residues 3–23; the sequence is ALVYTFLLIGTLMVIFFAVFF.

The protein belongs to the PsbT family. PSII is composed of 1 copy each of membrane proteins PsbA, PsbB, PsbC, PsbD, PsbE, PsbF, PsbH, PsbI, PsbJ, PsbK, PsbL, PsbM, PsbT, PsbX, PsbY, PsbZ, Psb30/Ycf12, at least 3 peripheral proteins of the oxygen-evolving complex and a large number of cofactors. It forms dimeric complexes.

It localises to the plastid. Its subcellular location is the chloroplast thylakoid membrane. Its function is as follows. Found at the monomer-monomer interface of the photosystem II (PS II) dimer, plays a role in assembly and dimerization of PSII. PSII is a light-driven water plastoquinone oxidoreductase, using light energy to abstract electrons from H(2)O, generating a proton gradient subsequently used for ATP formation. In Trieres chinensis (Marine centric diatom), this protein is Photosystem II reaction center protein T.